We begin with the raw amino-acid sequence, 343 residues long: Anthranilate phosphoribosyltransferase (343 aa).

5-phospho-alpha-D-ribose 1-diphosphate-binding positions include glycine 84, 87–88, threonine 92, 94–97, 112–120, and serine 124; these read GD, NIST, and KHGNRGVSS. Glycine 84 contributes to the anthranilate binding site. Serine 96 serves as a coordination point for Mg(2+). Asparagine 115 lines the anthranilate pocket. Residue arginine 170 coordinates anthranilate. Mg(2+) is bound by residues aspartate 229 and glutamate 230.

It belongs to the anthranilate phosphoribosyltransferase family. As to quaternary structure, homodimer. It depends on Mg(2+) as a cofactor.

It carries out the reaction N-(5-phospho-beta-D-ribosyl)anthranilate + diphosphate = 5-phospho-alpha-D-ribose 1-diphosphate + anthranilate. The protein operates within amino-acid biosynthesis; L-tryptophan biosynthesis; L-tryptophan from chorismate: step 2/5. Catalyzes the transfer of the phosphoribosyl group of 5-phosphorylribose-1-pyrophosphate (PRPP) to anthranilate to yield N-(5'-phosphoribosyl)-anthranilate (PRA). The polypeptide is Anthranilate phosphoribosyltransferase (Burkholderia ambifaria (strain MC40-6)).